Here is a 176-residue protein sequence, read N- to C-terminus: Large ribosomal subunit protein uL10 (176 aa).

Belongs to the universal ribosomal protein uL10 family. In terms of assembly, part of the ribosomal stalk of the 50S ribosomal subunit. The N-terminus interacts with L11 and the large rRNA to form the base of the stalk. The C-terminus forms an elongated spine to which L12 dimers bind in a sequential fashion forming a multimeric L10(L12)X complex.

Functionally, forms part of the ribosomal stalk, playing a central role in the interaction of the ribosome with GTP-bound translation factors. The sequence is that of Large ribosomal subunit protein uL10 from Marinobacter nauticus (strain ATCC 700491 / DSM 11845 / VT8) (Marinobacter aquaeolei).